The chain runs to 259 residues: Type-2Aa cytolytic delta-endotoxin (259 aa).

It belongs to the cyt1/cyt2 endotoxin family. As to quaternary structure, homodimer (protoxin) and monomer (active toxin). Post-translationally, active after proteolytic processing.

Its function is as follows. Kills the larvae of dipteran insects by making pores in the epithelial cell membrane of the insect midgut. In Bacillus thuringiensis subsp. kyushuensis, this protein is Type-2Aa cytolytic delta-endotoxin (cyt2Aa1).